The primary structure comprises 58 residues: MKISFLLLLAIVICSIGWTEAQFTNVSCSASSQCWPVCEKLFGTYRGKCMNSKCRCYS.

A signal peptide spans 1–21 (MKISFLLLLAIVICSIGWTEA). Gln-22 carries the post-translational modification Pyrrolidone carboxylic acid. Disulfide bonds link Cys-28–Cys-49, Cys-34–Cys-54, and Cys-38–Cys-56.

Belongs to the short scorpion toxin superfamily. Potassium channel inhibitor family. Alpha-KTx 01 subfamily. As to expression, expressed by the venom gland.

It localises to the secreted. Functionally, potent blocker of both large-conductance calcium-activated potassium channels (KCa1.1/KCNMA1) and voltage-gated potassium channels (Kv1.3/KCNA3 and ERG1/Kv11.1/KCNH2). This chain is Potassium channel toxin alpha-KTx BmKcug1a, found in Olivierus martensii (Manchurian scorpion).